A 91-amino-acid polypeptide reads, in one-letter code: Sec-independent protein translocase protein TatA (91 aa).

The helical transmembrane segment at 1–21 threads the bilayer; that stretch reads MGAMQPMHWLIVAVVVVILFG.

The protein belongs to the TatA/E family. As to quaternary structure, the Tat system comprises two distinct complexes: a TatABC complex, containing multiple copies of TatA, TatB and TatC subunits, and a separate TatA complex, containing only TatA subunits. Substrates initially bind to the TatABC complex, which probably triggers association of the separate TatA complex to form the active translocon.

It localises to the cell membrane. Its function is as follows. Part of the twin-arginine translocation (Tat) system that transports large folded proteins containing a characteristic twin-arginine motif in their signal peptide across membranes. TatA could form the protein-conducting channel of the Tat system. The protein is Sec-independent protein translocase protein TatA of Rhodococcus erythropolis (strain PR4 / NBRC 100887).